We begin with the raw amino-acid sequence, 193 residues long: dCTP deaminase (193 aa).

Residues 110-115 (RSSLAR), Asp128, 136-138 (VLE), Tyr171, Lys178, and Gln182 each bind dCTP. Glu138 serves as the catalytic Proton donor/acceptor.

It belongs to the dCTP deaminase family. As to quaternary structure, homotrimer.

It catalyses the reaction dCTP + H2O + H(+) = dUTP + NH4(+). It participates in pyrimidine metabolism; dUMP biosynthesis; dUMP from dCTP (dUTP route): step 1/2. Catalyzes the deamination of dCTP to dUTP. The chain is dCTP deaminase from Tolumonas auensis (strain DSM 9187 / NBRC 110442 / TA 4).